A 120-amino-acid chain; its full sequence is Fumarate reductase subunit D (120 aa).

Transmembrane regions (helical) follow at residues 25-45, 55-75, and 100-120; these read FAML…LGVI, VAGF…ISMP, and IACY…IFMI.

The protein belongs to the FrdD family. Part of an enzyme complex containing four subunits: a flavoprotein (FrdA), an iron-sulfur protein (FrdB), and two hydrophobic anchor proteins (FrdC and FrdD).

It localises to the cell inner membrane. Its function is as follows. Anchors the catalytic components of the fumarate reductase complex to the cell membrane, binds quinones. The polypeptide is Fumarate reductase subunit D (Aliivibrio fischeri (strain MJ11) (Vibrio fischeri)).